A 269-amino-acid polypeptide reads, in one-letter code: Glutamate 5-kinase 2 (269 aa).

Lysine 16 provides a ligand contact to ATP. The substrate site is built by serine 57, aspartate 144, and asparagine 156. 218–224 (SGGMISK) is a binding site for ATP.

Belongs to the glutamate 5-kinase family.

The protein resides in the cytoplasm. The catalysed reaction is L-glutamate + ATP = L-glutamyl 5-phosphate + ADP. It participates in amino-acid biosynthesis; L-proline biosynthesis; L-glutamate 5-semialdehyde from L-glutamate: step 1/2. Its function is as follows. Catalyzes the transfer of a phosphate group to glutamate to form L-glutamate 5-phosphate. This chain is Glutamate 5-kinase 2, found in Rhizobium meliloti (strain 1021) (Ensifer meliloti).